The following is a 947-amino-acid chain: MTPLSSPLSQYWQTVVERLPEGFTETSLSVQAKSVLTFSDFALDSVIAHPEWLAELESASPQADEWRHYAGWLQEALAGVCDDASLMRELRFFRRRIMVRIAWAQTLSLVDDETILQQLSHLAETLIVGARDWLYAACCREWGTPCNPQGVPQPLLILGMGKLGGGELNFSSDIDLIFAWPEHGETRGGRRELDNAQFFTRLGQRLIKALDQPTMDGFVYRVDMRLRPFGDSGPLVLSFAALEDYYQEQGRDWERYAMVKARLMGDNDDAWSRELRAMLRPFVFRRYIDFSVIQSLRNMKGMIAREVRRRGLKDNIKLGAGGIREIEFIVQVFQLIRGGREPSLQSRSLLPTLDAIAALHLLPENDVAQLRVAYLFLRRLENLLQSINDEQTQTLPADDLNRARLAWGMKAENWPQLVGELTDHMANVRRVFNELIGDDEADTPQEEERSEPWREVWQDALQEDDSTPVLAHLADEDRRQVLTLIADFRKELDKRPIGPRGRQVLDQLMPHLLADVCSREDAAVTLSRITPLLAGIVTRTTYLELLSEFPGALKHLIMLCAASPMIASQLARYPLLLDELLDPGTLYQPTATDAYRDELRQYLLRVPEEDEEQQLEALRQFKQAQLLRIAAADIAGTLPVMKVSDHLTWLAEAMIDAVVQQAWTQMVARYGQPAHLDERQGRGFAVVGYGKLGGWELGYSSDLDLIFLHDCPMDVMTNGEREIDGRQFYLRLAQRIMHLFSTRTSSGILYEVDARLRPSGAAGMLVTSADAFADYQQHEAWTWEHQALVRARVVYGDPQLTSQFDTVRRTIMTTARDGKTLQTEVREMREKMRAHLGNKHRDRFDIKADEGGITDIEFIAQYLVLRYAHEKPKLTRWSDNVRILELLAQNGIMDEHEAQALTVAYTTLRDELHHLALQELPGHVAQTCFSKERALVQASWRKWLVAV.

The interval 1-440 (MTPLSSPLSQ…VFNELIGDDE (440 aa)) is adenylyl removase. The tract at residues 450–947 (SEPWREVWQD…ASWRKWLVAV (498 aa)) is adenylyl transferase.

Belongs to the GlnE family. The cofactor is Mg(2+).

It carries out the reaction [glutamine synthetase]-O(4)-(5'-adenylyl)-L-tyrosine + phosphate = [glutamine synthetase]-L-tyrosine + ADP. The catalysed reaction is [glutamine synthetase]-L-tyrosine + ATP = [glutamine synthetase]-O(4)-(5'-adenylyl)-L-tyrosine + diphosphate. Involved in the regulation of glutamine synthetase GlnA, a key enzyme in the process to assimilate ammonia. When cellular nitrogen levels are high, the C-terminal adenylyl transferase (AT) inactivates GlnA by covalent transfer of an adenylyl group from ATP to specific tyrosine residue of GlnA, thus reducing its activity. Conversely, when nitrogen levels are low, the N-terminal adenylyl removase (AR) activates GlnA by removing the adenylyl group by phosphorolysis, increasing its activity. The regulatory region of GlnE binds the signal transduction protein PII (GlnB) which indicates the nitrogen status of the cell. The polypeptide is Bifunctional glutamine synthetase adenylyltransferase/adenylyl-removing enzyme (Salmonella gallinarum (strain 287/91 / NCTC 13346)).